We begin with the raw amino-acid sequence, 70 residues long: Conotoxin AbVIB (70 aa).

The signal sequence occupies residues 1 to 17; sequence VIIIAVLFLTACQLTTA. The propeptide occupies 18–41; the sequence is ETSSRGKQKHRALRSTDKNSKLTR. The interval 20–41 is disordered; sequence SSRGKQKHRALRSTDKNSKLTR. Cystine bridges form between C43/C57, C50/C61, and C56/C68.

This sequence belongs to the conotoxin O1 superfamily. Expressed by the venom duct.

It localises to the secreted. The chain is Conotoxin AbVIB from Conus abbreviatus (Abbreviated cone).